Consider the following 427-residue polypeptide: 3-phosphoshikimate 1-carboxyvinyltransferase (427 aa).

3-phosphoshikimate contacts are provided by Lys-22, Ser-23, and Arg-27. Lys-22 is a phosphoenolpyruvate binding site. Gly-96 and Arg-124 together coordinate phosphoenolpyruvate. 3-phosphoshikimate-binding residues include Ser-169, Ser-170, Gln-171, Ser-197, Asp-313, Asn-336, and Lys-340. Phosphoenolpyruvate is bound at residue Gln-171. Asp-313 serves as the catalytic Proton acceptor. Positions 344, 386, and 411 each coordinate phosphoenolpyruvate.

The protein belongs to the EPSP synthase family. In terms of assembly, monomer.

The protein resides in the cytoplasm. It catalyses the reaction 3-phosphoshikimate + phosphoenolpyruvate = 5-O-(1-carboxyvinyl)-3-phosphoshikimate + phosphate. Its pathway is metabolic intermediate biosynthesis; chorismate biosynthesis; chorismate from D-erythrose 4-phosphate and phosphoenolpyruvate: step 6/7. Its function is as follows. Catalyzes the transfer of the enolpyruvyl moiety of phosphoenolpyruvate (PEP) to the 5-hydroxyl of shikimate-3-phosphate (S3P) to produce enolpyruvyl shikimate-3-phosphate and inorganic phosphate. The polypeptide is 3-phosphoshikimate 1-carboxyvinyltransferase (Klebsiella pneumoniae (strain 342)).